Consider the following 195-residue polypeptide: Recombination protein RecR (195 aa).

The segment at 53–68 adopts a C4-type zinc-finger fold; sequence CSVCFNIDVKSPCSIC. The region spanning 76–171 is the Toprim domain; it reads QLLCIVEELG…KITRLACGIP (96 aa).

The protein belongs to the RecR family.

Functionally, may play a role in DNA repair. It seems to be involved in an RecBC-independent recombinational process of DNA repair. It may act with RecF and RecO. This chain is Recombination protein RecR, found in Ehrlichia canis (strain Jake).